We begin with the raw amino-acid sequence, 204 residues long: Protease (204 aa).

Active-site residues include His-53, Asp-70, and Cys-121.

This sequence belongs to the peptidase C5 family. In terms of assembly, interacts with protease cofactor pVI-C; this interaction is necessary for protease activation.

It is found in the virion. The protein localises to the host nucleus. The catalysed reaction is Cleaves proteins of the adenovirus and its host cell at two consensus sites: -Yaa-Xaa-Gly-Gly-|-Xaa- and -Yaa-Xaa-Gly-Xaa-|-Gly- (in which Yaa is Met, Ile or Leu, and Xaa is any amino acid).. Requires DNA and protease cofactor for maximal activation. Inside nascent virions, becomes partially activated by binding to the viral DNA, allowing it to cleave the cofactor that binds to the protease and fully activates it. Actin, like the viral protease cofactor, seems to act as a cofactor in the cleavage of cytokeratin 18 and of actin itself. Cleaves viral precursor proteins (pTP, pIIIa, pVI, pVII, pVIII, and pX) inside newly assembled particles giving rise to mature virions. Protease complexed to its cofactor slides along the viral DNA to specifically locate and cleave the viral precursors. Mature virions have a weakened organization compared to the unmature virions, thereby facilitating subsequent uncoating. Without maturation, the particle lacks infectivity and is unable to uncoat. Late in adenovirus infection, in the cytoplasm, may participate in the cytoskeleton destruction. Cleaves host cell cytoskeletal keratins K7 and K18. The protein is Protease of Porcine adenovirus A serotype 3 (PAdV-3).